Reading from the N-terminus, the 184-residue chain is Ras-related protein Rap-1b-like protein (184 aa).

10-18 (GSRGVGKSA) contributes to the GTP binding site. Positions 32–40 (YDPTIEDSY) match the Effector region motif. GTP is bound by residues 57-61 (DTAGT), 116-119 (NKCD), and 147-149 (SAK). The S-geranylgeranyl cysteine moiety is linked to residue cysteine 181. The propeptide at 182–184 (QLL) is removed in mature form.

It belongs to the small GTPase superfamily. Ras family.

The protein resides in the cell membrane. It is found in the cytoplasm. The protein localises to the cytosol. The enzyme catalyses GTP + H2O = GDP + phosphate + H(+). Functionally, probable GTP-binding protein with intrinsic GTPase activity. This is Ras-related protein Rap-1b-like protein from Homo sapiens (Human).